A 471-amino-acid chain; its full sequence is UDP-glycosyltransferase CGT (471 aa).

His24 acts as the Proton acceptor in catalysis. An an anthocyanidin-binding site is contributed by His24. Asp120 acts as the Charge relay in catalysis. Thr143 contributes to the UDP-alpha-D-glucose binding site. The interval 280–281 (SR) is UDP. UDP-alpha-D-glucose is bound by residues Val343, Gln345, His360, Trp363, Asn364, Ser365, and Glu368. Gly383 contacts an anthocyanidin. UDP-alpha-D-glucose-binding residues include Asp384 and Gln385.

Belongs to the UDP-glycosyltransferase family.

It carries out the reaction a 3'-hydro-2'-hydroxy-beta-oxodihydrochalcone + UDP-alpha-D-glucose = a 3'-(beta-D-glucopyranosyl)-2'-hydroxy-beta-oxodihydrochalcone + UDP + H(+). In terms of biological role, UDP-glucose-dependent glucosyltransferase catalyzing the c-glucosylation of 2-hydroxyflavanones. Acts preferentially on the dibenzoylmethane tautomers formed in equilibrium with 2-hydroxyflavanones. No activity with naringenin or naringenin chalcone. This chain is UDP-glycosyltransferase CGT, found in Oryza sativa subsp. indica (Rice).